Reading from the N-terminus, the 456-residue chain is Hydroxyproline dehydrogenase (456 aa).

An N6-acetyllysine mark is found at Lys-310 and Lys-320.

The protein belongs to the proline oxidase family. It depends on FAD as a cofactor.

The enzyme catalyses trans-4-hydroxy-L-proline + a quinone = (3R,5S)-1-pyrroline-3-hydroxy-5-carboxylate + a quinol + H(+). It catalyses the reaction L-proline + a quinone = (S)-1-pyrroline-5-carboxylate + a quinol + H(+). Functionally, dehydrogenase that converts trans-4-L-hydroxyproline to delta-1-pyrroline-3-hydroxy-5-carboxylate (Hyp) using ubiquinone-10 as the terminal electron acceptor. Can also use proline as a substrate but with a very much lower efficiency. Does not react with other diastereomers of Hyp: trans-4-D-hydroxyproline and cis-4-L-hydroxyproline. Ubiquininone analogs such as menadione, duroquinone and ubiquinone-1 react more efficiently than oxygen as the terminal electron acceptor during catalysis. This Rattus norvegicus (Rat) protein is Hydroxyproline dehydrogenase.